The primary structure comprises 1493 residues: Son of sevenless homolog (1493 aa).

One can recognise a DH domain in the interval 244–448 (TYESVAVDFL…ERVVGCVSDM (205 aa)). In terms of domain architecture, PH spans 496 to 606 (ELEKDGDLGM…WMAVLVKVTT (111 aa)). One can recognise an N-terminal Ras-GEF domain in the interval 656–824 (GIPVIKCGTV…TILALIEKRV (169 aa)). In terms of domain architecture, Ras-GEF spans 897 to 1164 (HPIEIGRQLT…YNKSLEIQPK (268 aa)). 3 disordered regions span residues 1067 to 1091 (KSPP…DPEN), 1165 to 1248 (GLDT…DDAP), and 1263 to 1493 (HPKI…SSNK). The segment covering 1079-1088 (QQKDDLKASD) has biased composition (basic and acidic residues). Composition is skewed to polar residues over residues 1208–1231 (HSQN…NTPL) and 1279–1289 (SRANQSNSVSL). Residues 1308–1326 (STATSPTTLTTTTTPSSAG) are compositionally biased toward low complexity. The segment covering 1350–1361 (LTPSRDNSSPSA) has biased composition (polar residues). Positions 1381 to 1400 (STSSDVSSSPSTSGSTSSAT) are enriched in low complexity. Residues 1402–1417 (ENQEQLRVIFDREESH) are compositionally biased toward basic and acidic residues. Positions 1426–1435 (PLPPALPPPR) are enriched in pro residues. Polar residues predominate over residues 1453–1464 (HNSNSPTLSSEQ).

In terms of assembly, interacts with cmd-1 in the presence of Ca(2+).

Its function is as follows. Promotes the exchange of Ras-bound GDP by GTP. May regulate signaling pathways downstream of receptor tyrosine kinase, egl-15 and let-23. Required for larval and male spicule development, fluid homeostasis, vulva induction, spermatogenesis, and oogenesis by promoting meiosis prophase exit during oocyte maturation. Required for the delamination of G1 cell by promoting the loss of cell junctions and detachment from the excretory system during larval development. Plays a role in nicotinic acetylcholine receptor (nAChR)-mediated sensitivity to nicotine. Regulates synaptic levels of nAchR subunit lev-1 in the nerve cord. The protein is Son of sevenless homolog of Caenorhabditis elegans.